The primary structure comprises 230 residues: Cytochrome c oxidase subunit 2 (230 aa).

Over 1 to 14 (MAHPTQLGFQDAAS) the chain is Mitochondrial intermembrane. The helical transmembrane segment at 15-45 (PVMEELLHFHDHALMIVFLISALVLYVIITT) threads the bilayer. Residues 46–59 (VSTKLTNMYILDSQ) are Mitochondrial matrix-facing. A helical transmembrane segment spans residues 60–87 (EIEIVWTVLPALILILIALPSLRILYLM). At 88–230 (DEINDPHLTI…NWSTLMLKDA (143 aa)) the chain is on the mitochondrial intermembrane side. The Cu cation site is built by histidine 161, cysteine 196, glutamate 198, cysteine 200, histidine 204, and methionine 207. A Mg(2+)-binding site is contributed by glutamate 198.

Belongs to the cytochrome c oxidase subunit 2 family. In terms of assembly, component of the cytochrome c oxidase (complex IV, CIV), a multisubunit enzyme composed of 14 subunits. The complex is composed of a catalytic core of 3 subunits MT-CO1, MT-CO2 and MT-CO3, encoded in the mitochondrial DNA, and 11 supernumerary subunits COX4I, COX5A, COX5B, COX6A, COX6B, COX6C, COX7A, COX7B, COX7C, COX8 and NDUFA4, which are encoded in the nuclear genome. The complex exists as a monomer or a dimer and forms supercomplexes (SCs) in the inner mitochondrial membrane with NADH-ubiquinone oxidoreductase (complex I, CI) and ubiquinol-cytochrome c oxidoreductase (cytochrome b-c1 complex, complex III, CIII), resulting in different assemblies (supercomplex SCI(1)III(2)IV(1) and megacomplex MCI(2)III(2)IV(2)). Found in a complex with TMEM177, COA6, COX18, COX20, SCO1 and SCO2. Interacts with TMEM177 in a COX20-dependent manner. Interacts with COX20. Interacts with COX16. Cu cation serves as cofactor.

The protein resides in the mitochondrion inner membrane. It carries out the reaction 4 Fe(II)-[cytochrome c] + O2 + 8 H(+)(in) = 4 Fe(III)-[cytochrome c] + 2 H2O + 4 H(+)(out). Functionally, component of the cytochrome c oxidase, the last enzyme in the mitochondrial electron transport chain which drives oxidative phosphorylation. The respiratory chain contains 3 multisubunit complexes succinate dehydrogenase (complex II, CII), ubiquinol-cytochrome c oxidoreductase (cytochrome b-c1 complex, complex III, CIII) and cytochrome c oxidase (complex IV, CIV), that cooperate to transfer electrons derived from NADH and succinate to molecular oxygen, creating an electrochemical gradient over the inner membrane that drives transmembrane transport and the ATP synthase. Cytochrome c oxidase is the component of the respiratory chain that catalyzes the reduction of oxygen to water. Electrons originating from reduced cytochrome c in the intermembrane space (IMS) are transferred via the dinuclear copper A center (CU(A)) of subunit 2 and heme A of subunit 1 to the active site in subunit 1, a binuclear center (BNC) formed by heme A3 and copper B (CU(B)). The BNC reduces molecular oxygen to 2 water molecules using 4 electrons from cytochrome c in the IMS and 4 protons from the mitochondrial matrix. In Formosania lacustris (Oriental stream loach), this protein is Cytochrome c oxidase subunit 2 (mt-co2).